The chain runs to 195 residues: Imidazoleglycerol-phosphate dehydratase (195 aa).

This sequence belongs to the imidazoleglycerol-phosphate dehydratase family.

It is found in the cytoplasm. The catalysed reaction is D-erythro-1-(imidazol-4-yl)glycerol 3-phosphate = 3-(imidazol-4-yl)-2-oxopropyl phosphate + H2O. It functions in the pathway amino-acid biosynthesis; L-histidine biosynthesis; L-histidine from 5-phospho-alpha-D-ribose 1-diphosphate: step 6/9. The protein is Imidazoleglycerol-phosphate dehydratase of Geobacillus sp. (strain WCH70).